The sequence spans 117 residues: NADH-ubiquinone oxidoreductase chain 3 (117 aa).

Helical transmembrane passes span 6 to 26 (ILIL…ASYI), 58 to 78 (FFLI…LFPW), and 85 to 105 (LPLF…LGLI).

Belongs to the complex I subunit 3 family.

It is found in the mitochondrion membrane. It catalyses the reaction a ubiquinone + NADH + 5 H(+)(in) = a ubiquinol + NAD(+) + 4 H(+)(out). In terms of biological role, core subunit of the mitochondrial membrane respiratory chain NADH dehydrogenase (Complex I) that is believed to belong to the minimal assembly required for catalysis. Complex I functions in the transfer of electrons from NADH to the respiratory chain. The immediate electron acceptor for the enzyme is believed to be ubiquinone. The polypeptide is NADH-ubiquinone oxidoreductase chain 3 (ND3) (Sarcophyton glaucum (Toadstool umbrella leather coral)).